A 418-amino-acid chain; its full sequence is UDP-N-acetylglucosamine 1-carboxyvinyltransferase (418 aa).

22-23 (KN) contacts phosphoenolpyruvate. Residue arginine 92 coordinates UDP-N-acetyl-alpha-D-glucosamine. The Proton donor role is filled by cysteine 116. Cysteine 116 carries the 2-(S-cysteinyl)pyruvic acid O-phosphothioketal modification. UDP-N-acetyl-alpha-D-glucosamine contacts are provided by residues 121-125 (RPVDL), aspartate 305, and isoleucine 327.

It belongs to the EPSP synthase family. MurA subfamily.

The protein resides in the cytoplasm. It carries out the reaction phosphoenolpyruvate + UDP-N-acetyl-alpha-D-glucosamine = UDP-N-acetyl-3-O-(1-carboxyvinyl)-alpha-D-glucosamine + phosphate. Its pathway is cell wall biogenesis; peptidoglycan biosynthesis. Cell wall formation. Adds enolpyruvyl to UDP-N-acetylglucosamine. In Acidiphilium cryptum (strain JF-5), this protein is UDP-N-acetylglucosamine 1-carboxyvinyltransferase.